The following is a 262-amino-acid chain: 5'-nucleotidase SurE (262 aa).

4 residues coordinate a divalent metal cation: Asp-8, Asp-9, Ser-41, and Asn-97.

Belongs to the SurE nucleotidase family. Requires a divalent metal cation as cofactor.

It is found in the cytoplasm. The catalysed reaction is a ribonucleoside 5'-phosphate + H2O = a ribonucleoside + phosphate. In terms of biological role, nucleotidase that shows phosphatase activity on nucleoside 5'-monophosphates. This chain is 5'-nucleotidase SurE, found in Methanococcus maripaludis (strain DSM 14266 / JCM 13030 / NBRC 101832 / S2 / LL).